Here is a 198-residue protein sequence, read N- to C-terminus: uncharacterized protein (198 aa).

A coiled-coil region spans residues 20–58 (ERVRRDEELARLSADKEQAKNDLEESKRRIARLRGTVYE). The interval 144-198 (LSNRKTKNPESDRRRQSRKKKSTQIQASDEMKHRRHHVHKVHHYSQKQSSSTTRR) is disordered. Basic residues predominate over residues 176 to 188 (HRRHHVHKVHHYS). Polar residues predominate over residues 189–198 (QKQSSSTTRR).

The protein localises to the nucleus. It is found in the nucleolus. This is an uncharacterized protein from Schizosaccharomyces pombe (strain 972 / ATCC 24843) (Fission yeast).